A 746-amino-acid chain; its full sequence is Polyribonucleotide nucleotidyltransferase (746 aa).

Residues aspartate 493 and aspartate 499 each coordinate Mg(2+). Residues 560 to 619 (PRIITLQINPEKIGALIGPGGKTIRSITEATGAQIDIEEDGRVYISTADAAAAQQAVAMV) form the KH domain. One can recognise an S1 motif domain in the interval 629 to 698 (GDIFLGKVVR…GTGKVSLSRR (70 aa)). The interval 704-746 (ETAEDRRAAGAGRGLRDGGRSSGSERSGDRSPRSDDRPRPRRR) is disordered. Basic and acidic residues-rich tracts occupy residues 706-722 (AEDRRAAGAGRGLRDGG) and 729-746 (RSGDRSPRSDDRPRPRRR).

This sequence belongs to the polyribonucleotide nucleotidyltransferase family. Mg(2+) serves as cofactor.

It is found in the cytoplasm. It carries out the reaction RNA(n+1) + phosphate = RNA(n) + a ribonucleoside 5'-diphosphate. In terms of biological role, involved in mRNA degradation. Catalyzes the phosphorolysis of single-stranded polyribonucleotides processively in the 3'- to 5'-direction. The sequence is that of Polyribonucleotide nucleotidyltransferase from Roseiflexus castenholzii (strain DSM 13941 / HLO8).